Here is a 319-residue protein sequence, read N- to C-terminus: Transaldolase (319 aa).

The Schiff-base intermediate with substrate role is filled by K125.

Belongs to the transaldolase family. Type 1 subfamily. In terms of assembly, homodimer.

Its subcellular location is the cytoplasm. It carries out the reaction D-sedoheptulose 7-phosphate + D-glyceraldehyde 3-phosphate = D-erythrose 4-phosphate + beta-D-fructose 6-phosphate. The protein operates within carbohydrate degradation; pentose phosphate pathway; D-glyceraldehyde 3-phosphate and beta-D-fructose 6-phosphate from D-ribose 5-phosphate and D-xylulose 5-phosphate (non-oxidative stage): step 2/3. In terms of biological role, transaldolase is important for the balance of metabolites in the pentose-phosphate pathway. This chain is Transaldolase, found in Ralstonia nicotianae (strain ATCC BAA-1114 / GMI1000) (Ralstonia solanacearum).